The following is a 435-amino-acid chain: Serine--tRNA ligase (435 aa).

241-243 (TAE) lines the L-serine pocket. Position 272-274 (272-274 (RAE)) interacts with ATP. E295 lines the L-serine pocket. Residue 359–362 (EISS) coordinates ATP. S395 serves as a coordination point for L-serine.

Belongs to the class-II aminoacyl-tRNA synthetase family. Type-1 seryl-tRNA synthetase subfamily. As to quaternary structure, homodimer. The tRNA molecule binds across the dimer.

The protein localises to the cytoplasm. It catalyses the reaction tRNA(Ser) + L-serine + ATP = L-seryl-tRNA(Ser) + AMP + diphosphate + H(+). It carries out the reaction tRNA(Sec) + L-serine + ATP = L-seryl-tRNA(Sec) + AMP + diphosphate + H(+). The protein operates within aminoacyl-tRNA biosynthesis; selenocysteinyl-tRNA(Sec) biosynthesis; L-seryl-tRNA(Sec) from L-serine and tRNA(Sec): step 1/1. Functionally, catalyzes the attachment of serine to tRNA(Ser). Is also able to aminoacylate tRNA(Sec) with serine, to form the misacylated tRNA L-seryl-tRNA(Sec), which will be further converted into selenocysteinyl-tRNA(Sec). This Haemophilus ducreyi (strain 35000HP / ATCC 700724) protein is Serine--tRNA ligase.